The primary structure comprises 169 residues: Ribosome maturation factor RimM (169 aa).

Residues 97–169 (PGEYYWYQLI…VITVDWDMNF (73 aa)) enclose the PRC barrel domain.

This sequence belongs to the RimM family. Binds ribosomal protein uS19.

The protein localises to the cytoplasm. Functionally, an accessory protein needed during the final step in the assembly of 30S ribosomal subunit, possibly for assembly of the head region. Essential for efficient processing of 16S rRNA. May be needed both before and after RbfA during the maturation of 16S rRNA. It has affinity for free ribosomal 30S subunits but not for 70S ribosomes. This chain is Ribosome maturation factor RimM, found in Legionella pneumophila (strain Paris).